The chain runs to 219 residues: Probable nicotinate-nucleotide adenylyltransferase (219 aa).

It belongs to the NadD family.

It catalyses the reaction nicotinate beta-D-ribonucleotide + ATP + H(+) = deamido-NAD(+) + diphosphate. It participates in cofactor biosynthesis; NAD(+) biosynthesis; deamido-NAD(+) from nicotinate D-ribonucleotide: step 1/1. Its function is as follows. Catalyzes the reversible adenylation of nicotinate mononucleotide (NaMN) to nicotinic acid adenine dinucleotide (NaAD). The protein is Probable nicotinate-nucleotide adenylyltransferase of Herminiimonas arsenicoxydans.